The chain runs to 710 residues: Dihydroxyacetone synthase (710 aa).

Thiamine diphosphate-binding positions include His78 and 128 to 130; that span reads GPL. Residues Asp169, Asn199, and Val201 each coordinate Mg(2+). Position 199 (Asn199) interacts with thiamine diphosphate. Positions 275, 433, and 461 each coordinate thiamine diphosphate. Residue Glu433 is the Proton donor of the active site. Positions 708-710 match the Microbody targeting signal motif; it reads NKL.

It belongs to the transketolase family. Mg(2+) is required as a cofactor. Requires Ca(2+) as cofactor. It depends on Mn(2+) as a cofactor. The cofactor is Co(2+). Thiamine diphosphate serves as cofactor.

It localises to the peroxisome. The catalysed reaction is D-xylulose 5-phosphate + formaldehyde = dihydroxyacetone + D-glyceraldehyde 3-phosphate. This is the major methanol assimilatory enzyme from the methylotrophic Hansenula polymorpha. This chain is Dihydroxyacetone synthase (DAS), found in Pichia angusta (Yeast).